The chain runs to 239 residues: Lactate utilization protein A 2 (239 aa).

This sequence belongs to the LutA/YkgE family.

Its function is as follows. Is involved in L-lactate degradation and allows cells to grow with lactate as the sole carbon source. The chain is Lactate utilization protein A 2 from Bacillus mycoides (strain KBAB4) (Bacillus weihenstephanensis).